The chain runs to 211 residues: MEKKKKLILFDFDSTLVNNETIDEIAREAGVEEEVKKITKEAMEGKLNFEQSLRKRVSLLKDLPIEKVEKAIKRITPTEGAEETIKELKNRGYVVAVVSGGFDIAVNKIKEKLGLDYAFANRLIVKDGKLTGDVEGEVLKENAKGEILEKIAKIEGINLEDTVAVGDGANDISMFKKAGLKIAFCAKPILKEKADICIEKRDLREILKYIK.

Asp-11 serves as the catalytic Nucleophile. Residues Asp-11 and Asp-13 each contribute to the Mg(2+) site. Catalysis depends on Asp-13, which acts as the Proton donor. Residues Glu-20, Arg-56, 99-100 (SG), and Lys-144 contribute to the substrate site. Asp-167 lines the Mg(2+) pocket. Asn-170 provides a ligand contact to substrate.

It belongs to the HAD-like hydrolase superfamily. SerB family. Requires Mg(2+) as cofactor.

It carries out the reaction O-phospho-L-serine + H2O = L-serine + phosphate. The catalysed reaction is O-phospho-D-serine + H2O = D-serine + phosphate. The protein operates within amino-acid biosynthesis; L-serine biosynthesis; L-serine from 3-phospho-D-glycerate: step 3/3. The sequence is that of Phosphoserine phosphatase from Methanocaldococcus jannaschii (strain ATCC 43067 / DSM 2661 / JAL-1 / JCM 10045 / NBRC 100440) (Methanococcus jannaschii).